The following is a 425-amino-acid chain: Serine hydroxymethyltransferase (425 aa).

Gly132–Leu134 provides a ligand contact to (6S)-5,6,7,8-tetrahydrofolate. Lys237 carries the N6-(pyridoxal phosphate)lysine modification.

It belongs to the SHMT family. As to quaternary structure, homodimer. Pyridoxal 5'-phosphate serves as cofactor.

It localises to the cytoplasm. It catalyses the reaction (6R)-5,10-methylene-5,6,7,8-tetrahydrofolate + glycine + H2O = (6S)-5,6,7,8-tetrahydrofolate + L-serine. It participates in one-carbon metabolism; tetrahydrofolate interconversion. Its pathway is amino-acid biosynthesis; glycine biosynthesis; glycine from L-serine: step 1/1. In terms of biological role, catalyzes the reversible interconversion of serine and glycine with tetrahydrofolate (THF) serving as the one-carbon carrier. This reaction serves as the major source of one-carbon groups required for the biosynthesis of purines, thymidylate, methionine, and other important biomolecules. Also exhibits THF-independent aldolase activity toward beta-hydroxyamino acids, producing glycine and aldehydes, via a retro-aldol mechanism. The polypeptide is Serine hydroxymethyltransferase (Wolbachia sp. subsp. Brugia malayi (strain TRS)).